Here is a 517-residue protein sequence, read N- to C-terminus: AAA ATPase forming ring-shaped complexes (517 aa).

A coiled-coil region spans residues 25 to 53 (ARNAKLVELLQASRTKLEEINGRLEALAE). 233 to 238 (GNGKTL) is a binding site for ATP.

It belongs to the AAA ATPase family. As to quaternary structure, homohexamer. Assembles into a hexameric ring structure.

This chain is AAA ATPase forming ring-shaped complexes, found in Corynebacterium jeikeium (strain K411).